Here is a 337-residue protein sequence, read N- to C-terminus: Phenylalanine--tRNA ligase alpha subunit (337 aa).

Position 252 (Glu252) interacts with Mg(2+).

It belongs to the class-II aminoacyl-tRNA synthetase family. Phe-tRNA synthetase alpha subunit type 1 subfamily. Tetramer of two alpha and two beta subunits. Mg(2+) is required as a cofactor.

It localises to the cytoplasm. It catalyses the reaction tRNA(Phe) + L-phenylalanine + ATP = L-phenylalanyl-tRNA(Phe) + AMP + diphosphate + H(+). The sequence is that of Phenylalanine--tRNA ligase alpha subunit from Francisella tularensis subsp. novicida (strain U112).